Consider the following 119-residue polypeptide: Putative yippee-like protein Os10g0369500 (119 aa).

Residues 21-118 (AVLKCRRCRV…LEKARMWKEA (98 aa)) form the Yippee domain. Residues Cys25, Cys28, Cys81, and Cys84 each coordinate Zn(2+).

This sequence belongs to the yippee family.

This is Putative yippee-like protein Os10g0369500 from Oryza sativa subsp. japonica (Rice).